A 123-amino-acid chain; its full sequence is UPF0102 protein VFMJ11_2324 (123 aa).

This sequence belongs to the UPF0102 family.

This is UPF0102 protein VFMJ11_2324 from Aliivibrio fischeri (strain MJ11) (Vibrio fischeri).